The primary structure comprises 943 residues: Isoleucine--tRNA ligase (943 aa).

A 'HIGH' region motif is present at residues 58 to 68; it reads PYANGTIHIGH. E567 contributes to the L-isoleucyl-5'-AMP binding site. Residues 608–612 carry the 'KMSKS' region motif; the sequence is KMSKS. K611 lines the ATP pocket. 4 residues coordinate Zn(2+): C906, C909, C926, and C929.

The protein belongs to the class-I aminoacyl-tRNA synthetase family. IleS type 1 subfamily. In terms of assembly, monomer. The cofactor is Zn(2+).

Its subcellular location is the cytoplasm. It catalyses the reaction tRNA(Ile) + L-isoleucine + ATP = L-isoleucyl-tRNA(Ile) + AMP + diphosphate. In terms of biological role, catalyzes the attachment of isoleucine to tRNA(Ile). As IleRS can inadvertently accommodate and process structurally similar amino acids such as valine, to avoid such errors it has two additional distinct tRNA(Ile)-dependent editing activities. One activity is designated as 'pretransfer' editing and involves the hydrolysis of activated Val-AMP. The other activity is designated 'posttransfer' editing and involves deacylation of mischarged Val-tRNA(Ile). In Pseudomonas syringae pv. tomato (strain ATCC BAA-871 / DC3000), this protein is Isoleucine--tRNA ligase.